Here is a 950-residue protein sequence, read N- to C-terminus: Xylanolytic transcriptional activator xlnR (950 aa).

Residues 1-97 (MSTTSLQHFS…NSSQRDPLVE (97 aa)) form a disordered region. Positions 8–22 (HFSHSYSPFPSSRSS) are enriched in low complexity. Positions 23-33 (NRMAQSQTSGL) are enriched in polar residues. Positions 65-78 (KPKDQYQIDNDNHH) are enriched in basic and acidic residues. Polar residues predominate over residues 81–92 (HSLPSFKNSSQR). Positions 119-145 (CDQCNQLRTKCDGQNPCAHCIEFGLTC) form a DNA-binding region, zn(2)-C6 fungal-type. Disordered stretches follow at residues 163 to 247 (AAAA…GGLE), 300 to 329 (NDSA…TENP), and 561 to 603 (RELP…PGNT). A compositionally biased stretch (polar residues) spans 302–329 (SAYSLMNPQEPNSTSISHFRLGSSTENP). The segment covering 570 to 586 (SRPDAERDGDPDADLSK) has biased composition (basic and acidic residues).

This sequence belongs to the xlnR/xlr1 family.

Its subcellular location is the nucleus. Its function is as follows. Transcriptional activator of the xylanolytic system. Involved in the regulation of extracellular cellulolytic and xylanolytic genes and in the regulation of the intracellular activities of D-xylose catabolic genes in the pentose catabolic pathway (PCP) in response to the presence of D-xylose. The protein is Xylanolytic transcriptional activator xlnR (xlnR) of Neosartorya fischeri (strain ATCC 1020 / DSM 3700 / CBS 544.65 / FGSC A1164 / JCM 1740 / NRRL 181 / WB 181) (Aspergillus fischerianus).